A 476-amino-acid chain; its full sequence is Hyaluronidase-2 (476 aa).

The N-terminal stretch at 1–20 (MWTGLGPAVTLALVLVVAWA) is a signal peptide. 2 disulfides stabilise this stretch: cysteine 47-cysteine 343 and cysteine 214-cysteine 230. N-linked (GlcNAc...) asparagine glycans are attached at residues asparagine 77 and asparagine 106. Residue glutamate 138 is the Proton donor of the active site. N-linked (GlcNAc...) asparagine glycosylation is found at asparagine 340 and asparagine 360. An EGF-like domain is found at 364–442 (AAQYCSWAQC…YLGWGGEQCQ (79 aa)). 3 cysteine pairs are disulfide-bonded: cysteine 368/cysteine 379, cysteine 373/cysteine 430, and cysteine 432/cysteine 441. Glycine 451 is lipidated: GPI-anchor amidated glycine. A propeptide spans 452-476 (ASGAWAGSHLTGLLAVAVLAFTWTS) (removed in mature form).

Belongs to the glycosyl hydrolase 56 family. As to quaternary structure, interacts with MST1R. In terms of assembly, (Microbial infection) Interacts with Jaagsiekte sheep retrovirus (JSRV) envelope proteins.

The protein localises to the cell membrane. It catalyses the reaction Random hydrolysis of (1-&gt;4)-linkages between N-acetyl-beta-D-glucosamine and D-glucuronate residues in hyaluronate.. In terms of biological role, catalyzes hyaluronan degradation into small fragments that are endocytosed and degraded in lysosomes by HYAL1 and exoglycosidases. Essential for the breakdown of extracellular matrix hyaluronan. The protein is Hyaluronidase-2 (HYAL2) of Ovis aries (Sheep).